Reading from the N-terminus, the 522-residue chain is Thiamine biosynthetic bifunctional enzyme TH1, chloroplastic (522 aa).

The transit peptide at 1-36 (MNSLGGIRSWPANWRSTTASMTTTESVRKVPQVLTV) directs the protein to the chloroplast. 4-amino-2-methyl-5-(diphosphooxymethyl)pyrimidine contacts are provided by residues 345–349 (QLREK) and N377. 2 residues coordinate Mg(2+): D378 and D397. S416 lines the 4-amino-2-methyl-5-(diphosphooxymethyl)pyrimidine pocket. Position 442 to 444 (442 to 444 (TNT)) interacts with 2-[(2R,5Z)-2-carboxy-4-methylthiazol-5(2H)-ylidene]ethyl phosphate. Position 445 (K445) interacts with 4-amino-2-methyl-5-(diphosphooxymethyl)pyrimidine. 2-[(2R,5Z)-2-carboxy-4-methylthiazol-5(2H)-ylidene]ethyl phosphate is bound by residues G472 and 495 to 496 (VS).

Belongs to the thiamine-phosphate synthase family. Requires Mg(2+) as cofactor.

It is found in the plastid. The protein localises to the chloroplast. It catalyses the reaction 2-[(2R,5Z)-2-carboxy-4-methylthiazol-5(2H)-ylidene]ethyl phosphate + 4-amino-2-methyl-5-(diphosphooxymethyl)pyrimidine + 2 H(+) = thiamine phosphate + CO2 + diphosphate. The catalysed reaction is 2-(2-carboxy-4-methylthiazol-5-yl)ethyl phosphate + 4-amino-2-methyl-5-(diphosphooxymethyl)pyrimidine + 2 H(+) = thiamine phosphate + CO2 + diphosphate. The enzyme catalyses 4-methyl-5-(2-phosphooxyethyl)-thiazole + 4-amino-2-methyl-5-(diphosphooxymethyl)pyrimidine + H(+) = thiamine phosphate + diphosphate. It carries out the reaction 4-amino-5-hydroxymethyl-2-methylpyrimidine + ATP = 4-amino-2-methyl-5-(phosphooxymethyl)pyrimidine + ADP + H(+). Its pathway is cofactor biosynthesis; thiamine diphosphate biosynthesis; thiamine phosphate from 4-amino-2-methyl-5-diphosphomethylpyrimidine and 4-methyl-5-(2-phosphoethyl)-thiazole: step 1/1. The protein operates within cofactor biosynthesis; thiamine diphosphate biosynthesis; 4-amino-2-methyl-5-diphosphomethylpyrimidine from 5-amino-1-(5-phospho-D-ribosyl)imidazole: step 2/3. Its function is as follows. Essential for thiamine biosynthesis. Bifunctional enzyme that catalyzes the phosphorylation of hydroxymethylpyrimidine phosphate (HMP-P) to HMP-PP and condenses 4-methyl-5-(beta-hydroxyethyl)thiazole monophosphate (THZ-P) and 2-methyl-4-amino-5-hydroxymethyl pyrimidine pyrophosphate (HMP-PP) to form thiamine monophosphate (TMP). The sequence is that of Thiamine biosynthetic bifunctional enzyme TH1, chloroplastic (TH1) from Arabidopsis thaliana (Mouse-ear cress).